The sequence spans 354 residues: Methionine import ATP-binding protein MetN (354 aa).

In terms of domain architecture, ABC transporter spans 8 to 250 (LDHIDITFRQ…PKEALTQEFI (243 aa)). 42–49 (GYSGAGKS) lines the ATP pocket.

The protein belongs to the ABC transporter superfamily. Methionine importer (TC 3.A.1.24) family. In terms of assembly, the complex is composed of two ATP-binding proteins (MetN), two transmembrane proteins (MetI) and a solute-binding protein (MetQ).

Its subcellular location is the cell membrane. The enzyme catalyses L-methionine(out) + ATP + H2O = L-methionine(in) + ADP + phosphate + H(+). It carries out the reaction D-methionine(out) + ATP + H2O = D-methionine(in) + ADP + phosphate + H(+). Its function is as follows. Part of the ABC transporter complex MetNIQ involved in methionine import. Responsible for energy coupling to the transport system. In Streptococcus pyogenes serotype M2 (strain MGAS10270), this protein is Methionine import ATP-binding protein MetN.